A 255-amino-acid chain; its full sequence is Kallikrein-4 (255 aa).

A signal peptide spans 1-25; sequence MMVTARTPWGWFLGCLILEVTGASA. The propeptide occupies 26 to 31; that stretch reads SSVSSR. A Peptidase S1 domain is found at 32-253; the sequence is IIQGQDCSPH…FTNWIQTIIQ (222 aa). A Zn(2+)-binding site is contributed by H41. C57 and C73 are disulfide-bonded. Catalysis depends on H72, which acts as the Charge relay system. E92 serves as a coordination point for Zn(2+). The active-site Charge relay system is D117. N-linked (GlcNAc...) asparagine glycans are attached at residues N124 and N170. Intrachain disulfides connect C149–C214, C179–C193, and C204–C229. Catalysis depends on S208, which acts as the Charge relay system.

It belongs to the peptidase S1 family. Kallikrein subfamily. N-glycosylated. The N-glycan structures are of complex diantennary or triantennary type, which may be further modified with up to 2 sialic acid residues.

The protein localises to the secreted. Functionally, has a major role in enamel formation. Required during the maturation stage of tooth development for clearance of enamel proteins and normal structural patterning of the crystalline matrix. The protein is Kallikrein-4 of Mus musculus (Mouse).